The primary structure comprises 351 residues: Probable aldo-keto reductase 2 (351 aa).

Catalysis depends on Tyr-67, which acts as the Proton donor. Residue His-134 participates in substrate binding. 213-223 serves as a coordination point for NADP(+); that stretch reads SPLGRGFFSAG. The disordered stretch occupies residues 317-351; that stretch reads YASTDDVRGDRYPQAMANTTWQNSETPPLSSWKAQ. The segment covering 332 to 351 has biased composition (polar residues); the sequence is MANTTWQNSETPPLSSWKAQ.

It belongs to the aldo/keto reductase family.

The chain is Probable aldo-keto reductase 2 from Oryza sativa subsp. indica (Rice).